Consider the following 542-residue polypeptide: CTP synthase (542 aa).

An amidoligase domain region spans residues 1–265 (MARYVFITGG…DSEVLSAFGM (265 aa)). Ser-13 is a binding site for CTP. Residue Ser-13 participates in UTP binding. ATP is bound at residue 14–19 (SLGKGI). Tyr-54 is a binding site for L-glutamine. Residue Asp-71 coordinates ATP. Mg(2+) is bound by residues Asp-71 and Glu-139. Residues 146-148 (DIE), 186-191 (KTKPTQ), and Lys-222 contribute to the CTP site. UTP is bound by residues 186–191 (KTKPTQ) and Lys-222. The 251-residue stretch at 291–541 (TIAVVGKYTG…IEATVEQSRL (251 aa)) folds into the Glutamine amidotransferase type-1 domain. Position 353 (Ala-353) interacts with L-glutamine. The active-site Nucleophile; for glutamine hydrolysis is the Cys-380. L-glutamine is bound by residues 381-384 (FGMQ), Glu-404, and Arg-469. Residues His-514 and Glu-516 contribute to the active site.

The protein belongs to the CTP synthase family. As to quaternary structure, homotetramer.

The catalysed reaction is UTP + L-glutamine + ATP + H2O = CTP + L-glutamate + ADP + phosphate + 2 H(+). It catalyses the reaction L-glutamine + H2O = L-glutamate + NH4(+). It carries out the reaction UTP + NH4(+) + ATP = CTP + ADP + phosphate + 2 H(+). It functions in the pathway pyrimidine metabolism; CTP biosynthesis via de novo pathway; CTP from UDP: step 2/2. Allosterically activated by GTP, when glutamine is the substrate; GTP has no effect on the reaction when ammonia is the substrate. The allosteric effector GTP functions by stabilizing the protein conformation that binds the tetrahedral intermediate(s) formed during glutamine hydrolysis. Inhibited by the product CTP, via allosteric rather than competitive inhibition. In terms of biological role, catalyzes the ATP-dependent amination of UTP to CTP with either L-glutamine or ammonia as the source of nitrogen. Regulates intracellular CTP levels through interactions with the four ribonucleotide triphosphates. The chain is CTP synthase from Bartonella henselae (strain ATCC 49882 / DSM 28221 / CCUG 30454 / Houston 1) (Rochalimaea henselae).